The following is a 313-amino-acid chain: Cytochrome c biogenesis protein CcsA (313 aa).

Transmembrane regions (helical) follow at residues 9-29, 44-64, 71-91, 101-121, 143-163, 217-237, 244-264, and 278-298; these read ILTHISFSIVSIVITIHLITL, GIIVTFFCITGLLVTRWISSG, LYESLIFLSWSFSLIHIIPYF, IIGPSAIFTQGFATSGILTEI, MILGYAALLCGSLLSVALLVI, VISLGFTFLTIGILSGAVWAN, WNWDPKETWAFITWIVFAIYL, and AIVASIGFLIIWICYFGVNLL.

It belongs to the CcmF/CycK/Ccl1/NrfE/CcsA family. In terms of assembly, may interact with Ccs1.

Its subcellular location is the plastid. The protein localises to the chloroplast thylakoid membrane. In terms of biological role, required during biogenesis of c-type cytochromes (cytochrome c6 and cytochrome f) at the step of heme attachment. The protein is Cytochrome c biogenesis protein CcsA of Nicotiana tomentosiformis (Tobacco).